The sequence spans 248 residues: Type III pantothenate kinase (248 aa).

6 to 13 (DCGNSFIK) contacts ATP. Substrate contacts are provided by residues Tyr-92 and 99-102 (GLDR). Residue Asp-101 is the Proton acceptor of the active site. Asp-121 provides a ligand contact to K(+). Thr-124 is an ATP binding site. Residue Thr-180 participates in substrate binding.

The protein belongs to the type III pantothenate kinase family. In terms of assembly, homodimer. It depends on NH4(+) as a cofactor. Requires K(+) as cofactor.

It localises to the cytoplasm. It carries out the reaction (R)-pantothenate + ATP = (R)-4'-phosphopantothenate + ADP + H(+). It participates in cofactor biosynthesis; coenzyme A biosynthesis; CoA from (R)-pantothenate: step 1/5. Functionally, catalyzes the phosphorylation of pantothenate (Pan), the first step in CoA biosynthesis. This is Type III pantothenate kinase from Ectopseudomonas mendocina (strain ymp) (Pseudomonas mendocina).